The primary structure comprises 60 residues: Large ribosomal subunit protein bL32 (60 aa).

The span at 1–23 (MAKHPVPKKKTSKARRDARRSHH) shows a compositional bias: basic residues. Residues 1–28 (MAKHPVPKKKTSKARRDARRSHHALTPP) are disordered.

Belongs to the bacterial ribosomal protein bL32 family. In terms of assembly, part of the 50S ribosomal subunit.

Functionally, found on the solvent side of the large subunit. This Thermus thermophilus (strain ATCC BAA-163 / DSM 7039 / HB27) protein is Large ribosomal subunit protein bL32 (rpmF).